We begin with the raw amino-acid sequence, 288 residues long: uncharacterized protein (288 aa).

This is an uncharacterized protein from Ictaluridae (bullhead catfishes).